The sequence spans 466 residues: tRNA dimethylallyltransferase 2 (466 aa).

27 to 34 (GPTGSGKS) provides a ligand contact to ATP. 29–34 (TGSGKS) provides a ligand contact to substrate. An interaction with substrate tRNA region spans residues 52–55 (DAMQ). The tract at residues 433 to 466 (WEHHKQGRTHRKRTTRHKNSQTYKNREVQEAEVN) is disordered. The segment covering 437–451 (KQGRTHRKRTTRHKN) has biased composition (basic residues). A compositionally biased stretch (basic and acidic residues) spans 456-466 (KNREVQEAEVN).

It belongs to the IPP transferase family. The cofactor is Mg(2+). Expressed ubiquitously, with highest expression in proliferating tissues.

It is found in the cytoplasm. The enzyme catalyses adenosine(37) in tRNA + dimethylallyl diphosphate = N(6)-dimethylallyladenosine(37) in tRNA + diphosphate. Catalyzes the transfer of a dimethylallyl group onto the adenine at position 37 in tRNAs that read codons beginning with uridine, leading to the formation of N6-(dimethylallyl)adenosine (i(6)A). Involved in the cis-type cytokinin biosynthesis. In Arabidopsis thaliana (Mouse-ear cress), this protein is tRNA dimethylallyltransferase 2 (IPT2).